The chain runs to 478 residues: Flotillin-like protein 1 (478 aa).

Cysteine 35 carries S-palmitoyl cysteine lipidation. Positions glutamate 235 to glutamate 277 form a coiled coil.

It belongs to the band 7/mec-2 family. Flotillin subfamily. May be palmitoylated. In terms of tissue distribution, expressed in all plant organs. Primarily expressed in vascular tissues. No change in spatial expression in root upon inoculation. Expression limited to the nodule vascular tissue.

It is found in the cell membrane. The protein resides in the membrane. It localises to the caveola. Functionally, may act as a scaffolding protein within caveolar membranes, functionally participating in formation of caveolae or caveolae-like vesicles. May be involved in nodule formation. This Medicago truncatula (Barrel medic) protein is Flotillin-like protein 1 (FLOT1).